We begin with the raw amino-acid sequence, 319 residues long: Coiled-coil domain-containing protein 149 (319 aa).

Coiled-coil stretches lie at residues 1–199 (MANQ…RKNS) and 259–286 (IQHQ…LEVS). A helical membrane pass occupies residues 298–318 (VSIGFGSMFFLKYLCLWLIAV).

This sequence belongs to the CCDC149 family.

It localises to the membrane. The protein is Coiled-coil domain-containing protein 149 (CCDC149) of Bos taurus (Bovine).